The primary structure comprises 122 residues: Large ribosomal subunit protein uL14c (122 aa).

Belongs to the universal ribosomal protein uL14 family. As to quaternary structure, part of the 50S ribosomal subunit.

It is found in the plastid. Its subcellular location is the chloroplast. In terms of biological role, binds to 23S rRNA. This chain is Large ribosomal subunit protein uL14c, found in Capsella bursa-pastoris (Shepherd's purse).